A 425-amino-acid polypeptide reads, in one-letter code: Pleckstrin homology domain-containing family A member 2 (425 aa).

Residues 7-113 (QNRICGFLDI…WVEALNQASK (107 aa)) enclose the PH 1 domain. A Glycyl lysine isopeptide (Lys-Gly) (interchain with G-Cter in SUMO2) cross-link involves residue Lys141. Residue Ser184 is modified to Phosphoserine. A PH 2 domain is found at 198 to 298 (PLIKSGYCVK…WIEGIGAAVQ (101 aa)). Over residues 310-331 (SRSISLTRPGSSTLTSAPNSIL) the composition is skewed to polar residues. Positions 310–425 (SRSISLTRPG…DDENIRTSDV (116 aa)) are disordered. 2 positions are modified to phosphoserine: Ser314 and Ser349. 2 stretches are compositionally biased toward basic and acidic residues: residues 363-375 (AEEK…HAPE) and 400-410 (RSEPQHPKEKP).

Binds MPDZ and PTPN13.

It is found in the cytoplasm. Its subcellular location is the cell membrane. The protein localises to the nucleus. Functionally, binds specifically to phosphatidylinositol 3,4-diphosphate (PtdIns3,4P2), but not to other phosphoinositides. May recruit other proteins to the plasma membrane. The chain is Pleckstrin homology domain-containing family A member 2 (Plekha2) from Mus musculus (Mouse).